We begin with the raw amino-acid sequence, 741 residues long: Ethylene receptor (741 aa).

Transmembrane regions (helical) follow at residues 23–43, 53–73, and 92–112; these read ISDF…IYFV, WVLV…LINL, and VLTA…IPDL. 2 residues coordinate Cu cation: C65 and H69. One can recognise a GAF domain in the interval 158–307; that stretch reads DRHTILKTTL…VVADQVAVAL (150 aa). A Histidine kinase domain is found at 350-589; sequence VMNHEMRTPM…TFIVKLGFPE (240 aa). Phosphohistidine; by autocatalysis is present on H353. The region spanning 615 to 732 is the Response regulatory domain; that stretch reads KVLVMDDNGV…KMRSVLSELL (118 aa). D663 is subject to 4-aspartylphosphate.

This sequence belongs to the ethylene receptor family. In terms of assembly, homodimer; disulfide-linked. It depends on Cu cation as a cofactor. Post-translationally, activation probably requires a transfer of a phosphate group between a His in the transmitter domain and an Asp of the receiver domain.

The protein localises to the endoplasmic reticulum membrane. It carries out the reaction ATP + protein L-histidine = ADP + protein N-phospho-L-histidine.. Functionally, may act early in the ethylene signal transduction pathway, possibly as an ethylene receptor, or as a regulator of the pathway. The chain is Ethylene receptor (ETR1) from Malus domestica (Apple).